A 259-amino-acid chain; its full sequence is Uridylate kinase (259 aa).

10–13 (KLSG) serves as a coordination point for ATP. G52 contacts UMP. Residues G53 and R57 each coordinate ATP. UMP is bound by residues D72 and 134–141 (NGQPFLTT). ATP-binding residues include Y168 and D171. The interval 236–259 (ISSSPEKSEEFGNEVLASPAESTA) is disordered.

Belongs to the UMP kinase family. As to quaternary structure, homohexamer.

Its subcellular location is the cytoplasm. The catalysed reaction is UMP + ATP = UDP + ADP. Its pathway is pyrimidine metabolism; CTP biosynthesis via de novo pathway; UDP from UMP (UMPK route): step 1/1. Inhibited by UTP. Functionally, catalyzes the reversible phosphorylation of UMP to UDP. The polypeptide is Uridylate kinase (Frankia casuarinae (strain DSM 45818 / CECT 9043 / HFP020203 / CcI3)).